The following is an 88-amino-acid chain: Long neurotoxin LNTX-1 (88 aa).

The first 21 residues, 1 to 21 (MKTLLLTLVVVTIVCLDFGYA), serve as a signal peptide directing secretion. 5 cysteine pairs are disulfide-bonded: C24–C42, C35–C63, C48–C52, C67–C78, and C79–C84.

Belongs to the three-finger toxin family. Long-chain subfamily. Type II alpha-neurotoxin sub-subfamily. As to expression, expressed by the venom gland.

Its subcellular location is the secreted. In terms of biological role, binds with high affinity to muscular (alpha-1/CHRNA1) and neuronal (alpha-7/CHRNA7) nicotinic acetylcholine receptor (nAChR) and inhibits acetylcholine from binding to the receptor, thereby impairing neuromuscular and neuronal transmission. This is Long neurotoxin LNTX-1 from Demansia vestigiata (Lesser black whip snake).